A 149-amino-acid chain; its full sequence is Myosin, essential light chain (149 aa).

EF-hand domains lie at S7–N42 and G79–K114.

As to quaternary structure, myosin is a hexamer of 2 heavy chains and 4 light chains (two regulatory light chains and two essential light chains).

This chain is Myosin, essential light chain, found in Branchiostoma floridae (Florida lancelet).